The following is a 321-amino-acid chain: uncharacterized protein (321 aa).

10 helical membrane-spanning segments follow: residues 6-26, 37-57, 72-92, 100-120, 134-154, 160-180, 196-216, 223-243, 255-275, and 277-297; these read LFIGALTCLVASMSWGAMFPV, FYFSFIRYGVVTIMLVILLLV, WIILFGVMAFTIYNVLIFLGQ, IMTASIAEALMPMLSIVILWG, ILIAFLGASMVITKGNISFFF, LFSILFIFIGVLGWVVYTMGG, CLFGTAITGIMTAILTAQGYV, VIAAIKYDFLFMITLPGIIAL, SINGILFINFVPITTLLIMVI, and GYNITAFDIVGTLFVIIGLIL. 2 EamA domains span residues 18–146 and 175–300; these read MSWG…MVIT and VYTM…LNNI.

Belongs to the EamA transporter family.

Its subcellular location is the cell membrane. This is an uncharacterized protein from Bacillus subtilis (strain 168).